Here is a 198-residue protein sequence, read N- to C-terminus: Peptidyl-tRNA hydrolase (198 aa).

A tRNA-binding site is contributed by Y16. Residue H21 is the Proton acceptor of the active site. Residues Y67, N69, and N115 each coordinate tRNA.

This sequence belongs to the PTH family. Monomer.

Its subcellular location is the cytoplasm. It catalyses the reaction an N-acyl-L-alpha-aminoacyl-tRNA + H2O = an N-acyl-L-amino acid + a tRNA + H(+). Its function is as follows. Hydrolyzes ribosome-free peptidyl-tRNAs (with 1 or more amino acids incorporated), which drop off the ribosome during protein synthesis, or as a result of ribosome stalling. In terms of biological role, catalyzes the release of premature peptidyl moieties from peptidyl-tRNA molecules trapped in stalled 50S ribosomal subunits, and thus maintains levels of free tRNAs and 50S ribosomes. This chain is Peptidyl-tRNA hydrolase, found in Gloeobacter violaceus (strain ATCC 29082 / PCC 7421).